A 90-amino-acid polypeptide reads, in one-letter code: Mitochondrial import inner membrane translocase subunit Tim10 (90 aa).

A Twin CX3C motif motif is present at residues 29 to 54 (CHRKCVPPHYKEAELSKGESVCLDRC). Cystine bridges form between C29–C54 and C33–C50.

It belongs to the small Tim family. Heterohexamer; composed of 3 copies of TIMM9 and 3 copies of TIMM10/TIM10A, named soluble 70 kDa complex. The complex forms a 6-bladed alpha-propeller structure and associates with the TIMM22 component of the TIM22 complex. Interacts with multi-pass transmembrane proteins in transit. Also forms a complex composed of TIMM9, TIMM10/TIM10A and FXC1/TIM10B.

The protein localises to the mitochondrion inner membrane. In terms of biological role, mitochondrial intermembrane chaperone that participates in the import and insertion of multi-pass transmembrane proteins into the mitochondrial inner membrane. May also be required for the transfer of beta-barrel precursors from the TOM complex to the sorting and assembly machinery (SAM complex) of the outer membrane. Acts as a chaperone-like protein that protects the hydrophobic precursors from aggregation and guide them through the mitochondrial intermembrane space. This is Mitochondrial import inner membrane translocase subunit Tim10 (TIMM10) from Bos taurus (Bovine).